Here is a 183-residue protein sequence, read N- to C-terminus: CASP-like protein UU2 (183 aa).

Topologically, residues 1-33 are cytoplasmic; that stretch reads MEESQQQSSKFDAPPSPYVPSRVYLAQIYWKKP. The chain crosses the membrane as a helical span at residues 34–54; that stretch reads AIVVLRVLQFIFSLIAFSVMA. Topologically, residues 55-72 are extracellular; sequence DVLHDVQGSIKSLSYTVA. The helical transmembrane segment at 73–93 threads the bilayer; it reads IGVLACAYALAQLSFSLWCVI. The Cytoplasmic portion of the chain corresponds to 94–118; the sequence is RGATSSAGVTPLYQYATFICDQMST. The chain crosses the membrane as a helical span at residues 119–139; the sequence is YFLISAASATATLIDVSGVCG. Topologically, residues 140–156 are extracellular; that stretch reads SNGSGTNLCSRSTASVT. Residue asparagine 141 is glycosylated (N-linked (GlcNAc...) asparagine). A helical membrane pass occupies residues 157-177; it reads FAFLAFLAFSASSVLTGYYLV. The Cytoplasmic segment spans residues 178–183; the sequence is KCILKA.

This sequence belongs to the Casparian strip membrane proteins (CASP) family. In terms of assembly, homodimer and heterodimers.

It localises to the cell membrane. The sequence is that of CASP-like protein UU2 from Selaginella moellendorffii (Spikemoss).